A 507-amino-acid chain; its full sequence is Capsid vertex component 1 (507 aa).

The disordered stretch occupies residues Ala-219 to Val-257. The span at Ser-241–Val-257 shows a compositional bias: gly residues.

It belongs to the herpesviridae CVC1 protein family. As to quaternary structure, interacts (via C-terminus) with capsid vertex component 2/CVC2.

The protein resides in the virion. It is found in the host nucleus. Functionally, capsid vertex-specific component that plays a role during viral DNA encapsidation, assuring correct genome cleavage and presumably stabilizing capsids that contain full-length viral genomes. The protein is Capsid vertex component 1 of Epstein-Barr virus (strain B95-8) (HHV-4).